The chain runs to 183 residues: Adenine phosphoribosyltransferase (183 aa).

This sequence belongs to the purine/pyrimidine phosphoribosyltransferase family. In terms of assembly, homodimer.

It is found in the cytoplasm. It catalyses the reaction AMP + diphosphate = 5-phospho-alpha-D-ribose 1-diphosphate + adenine. Its pathway is purine metabolism; AMP biosynthesis via salvage pathway; AMP from adenine: step 1/1. In terms of biological role, catalyzes a salvage reaction resulting in the formation of AMP, that is energically less costly than de novo synthesis. The chain is Adenine phosphoribosyltransferase from Salmonella heidelberg (strain SL476).